The chain runs to 269 residues: Eukaryotic translation initiation factor 3 subunit G-2 (269 aa).

The RRM domain occupies Ser189–Pro267.

This sequence belongs to the eIF-3 subunit G family. As to quaternary structure, component of the eukaryotic translation initiation factor 3 (eIF-3) complex. The eIF-3 complex interacts with pix.

It localises to the cytoplasm. Its function is as follows. RNA-binding component of the eukaryotic translation initiation factor 3 (eIF-3) complex, which is involved in protein synthesis of a specialized repertoire of mRNAs and, together with other initiation factors, stimulates binding of mRNA and methionyl-tRNAi to the 40S ribosome. The eIF-3 complex specifically targets and initiates translation of a subset of mRNAs involved in cell proliferation. This subunit can bind 18S rRNA. The protein is Eukaryotic translation initiation factor 3 subunit G-2 of Drosophila ananassae (Fruit fly).